The following is a 176-amino-acid chain: Adenine phosphoribosyltransferase (176 aa).

It belongs to the purine/pyrimidine phosphoribosyltransferase family. As to quaternary structure, homodimer.

It is found in the cytoplasm. The enzyme catalyses AMP + diphosphate = 5-phospho-alpha-D-ribose 1-diphosphate + adenine. It participates in purine metabolism; AMP biosynthesis via salvage pathway; AMP from adenine: step 1/1. In terms of biological role, catalyzes a salvage reaction resulting in the formation of AMP, that is energically less costly than de novo synthesis. The sequence is that of Adenine phosphoribosyltransferase from Gluconacetobacter diazotrophicus (strain ATCC 49037 / DSM 5601 / CCUG 37298 / CIP 103539 / LMG 7603 / PAl5).